The following is a 424-amino-acid chain: Probable aminotransferase TAT4 (424 aa).

This sequence belongs to the class-I pyridoxal-phosphate-dependent aminotransferase family. It depends on pyridoxal 5'-phosphate as a cofactor.

This Arabidopsis thaliana (Mouse-ear cress) protein is Probable aminotransferase TAT4.